Consider the following 359-residue polypeptide: uncharacterized protein (359 aa).

The first 15 residues, 1 to 15 (MSIVLAIDTATAAVT), serve as a signal peptide directing secretion. The N-acetyltransferase domain occupies 212 to 359 (IVIGTLTPAD…DAYLMRREAQ (148 aa)).

This is an uncharacterized protein from Mycobacterium leprae (strain TN).